Here is an 82-residue protein sequence, read N- to C-terminus: ATP synthase subunit c, chloroplastic (82 aa).

Transmembrane regions (helical) follow at residues 3–23 (PIIS…AAIG) and 57–77 (LAFM…LLFA).

This sequence belongs to the ATPase C chain family. F-type ATPases have 2 components, F(1) - the catalytic core - and F(0) - the membrane proton channel. F(1) has five subunits: alpha(3), beta(3), gamma(1), delta(1), epsilon(1). F(0) has four main subunits: a(1), b(1), b'(1) and c(10-14). The alpha and beta chains form an alternating ring which encloses part of the gamma chain. F(1) is attached to F(0) by a central stalk formed by the gamma and epsilon chains, while a peripheral stalk is formed by the delta, b and b' chains.

Its subcellular location is the plastid. It localises to the chloroplast thylakoid membrane. Functionally, f(1)F(0) ATP synthase produces ATP from ADP in the presence of a proton or sodium gradient. F-type ATPases consist of two structural domains, F(1) containing the extramembraneous catalytic core and F(0) containing the membrane proton channel, linked together by a central stalk and a peripheral stalk. During catalysis, ATP synthesis in the catalytic domain of F(1) is coupled via a rotary mechanism of the central stalk subunits to proton translocation. Key component of the F(0) channel; it plays a direct role in translocation across the membrane. A homomeric c-ring of between 10-14 subunits forms the central stalk rotor element with the F(1) delta and epsilon subunits. The protein is ATP synthase subunit c, chloroplastic of Phaeodactylum tricornutum (strain CCAP 1055/1).